Consider the following 366-residue polypeptide: Protein sigma-NS (366 aa).

Residues 1–11 (MASSLRAAISK) form an important for ssRNA-binding and formation of complexes region.

It belongs to the orthoreovirus sigma-NS protein family. As to quaternary structure, homooligomer; in presence of RNA. Interacts with protein mu-NS; this interaction allows the localization of sigma-NS to the viral factories. Interacts with host G3BP1 (via C-terminus); this interaction induces the relocalization of G3BP1 and other SG proteins to the viral factories periphery.

It localises to the host cytoplasm. Protein that binds to ssRNA and participates with protein mu-NS in forming the matrix of viral factories, which are large inclusions in the host cytoplasm where replication intermediates are assembled and viral RNA replication takes place. Plays a role in the inhibition of the integrated stress response (ISR) to escape from host cell translational shutoff. Participates in the disruption of stress granules (SG) through its association with host G3BP1 and mu-NS. The sequence is that of Protein sigma-NS (S3) from Mammalia (T2J).